We begin with the raw amino-acid sequence, 193 residues long: Holliday junction branch migration complex subunit RuvA (193 aa).

A domain I region spans residues 1-64 (MIGRIAGTLL…EDAHLLYGFL (64 aa)). Positions 65 to 139 (TPQERSTFRE…GKLGADLGPL (75 aa)) are domain II. The interval 139 to 143 (LAGAA) is flexible linker. Residues 144 to 193 (SPSDHAADILNALLALGYSEKEALAAIKNVPAGTGVSEGIKLSLKALSKA) form a domain III region.

This sequence belongs to the RuvA family. Homotetramer. Forms an RuvA(8)-RuvB(12)-Holliday junction (HJ) complex. HJ DNA is sandwiched between 2 RuvA tetramers; dsDNA enters through RuvA and exits via RuvB. An RuvB hexamer assembles on each DNA strand where it exits the tetramer. Each RuvB hexamer is contacted by two RuvA subunits (via domain III) on 2 adjacent RuvB subunits; this complex drives branch migration. In the full resolvosome a probable DNA-RuvA(4)-RuvB(12)-RuvC(2) complex forms which resolves the HJ.

It localises to the cytoplasm. The RuvA-RuvB-RuvC complex processes Holliday junction (HJ) DNA during genetic recombination and DNA repair, while the RuvA-RuvB complex plays an important role in the rescue of blocked DNA replication forks via replication fork reversal (RFR). RuvA specifically binds to HJ cruciform DNA, conferring on it an open structure. The RuvB hexamer acts as an ATP-dependent pump, pulling dsDNA into and through the RuvAB complex. HJ branch migration allows RuvC to scan DNA until it finds its consensus sequence, where it cleaves and resolves the cruciform DNA. This Burkholderia thailandensis (strain ATCC 700388 / DSM 13276 / CCUG 48851 / CIP 106301 / E264) protein is Holliday junction branch migration complex subunit RuvA.